Consider the following 904-residue polypeptide: Alanine--tRNA ligase (904 aa).

Positions 584, 588, 687, and 691 each coordinate Zn(2+).

This sequence belongs to the class-II aminoacyl-tRNA synthetase family. Zn(2+) serves as cofactor.

It is found in the cytoplasm. The enzyme catalyses tRNA(Ala) + L-alanine + ATP = L-alanyl-tRNA(Ala) + AMP + diphosphate. In terms of biological role, catalyzes the attachment of alanine to tRNA(Ala) in a two-step reaction: alanine is first activated by ATP to form Ala-AMP and then transferred to the acceptor end of tRNA(Ala). Also edits incorrectly charged Ser-tRNA(Ala) and Gly-tRNA(Ala) via its editing domain. This chain is Alanine--tRNA ligase, found in Mycobacterium bovis (strain ATCC BAA-935 / AF2122/97).